The following is a 172-amino-acid chain: Early E3 18.5 kDa glycoprotein (172 aa).

Residues 1–19 form the signal peptide; the sequence is MGAILVVLALLSLLGLGSA. The Lumenal segment spans residues 20-136; it reads NLNPLDHDPC…SKENIVAFSI (117 aa). N-linked (GlcNAc...) asparagine; by host glycosylation is present at Asn-36. Cystine bridges form between Cys-37–Cys-55 and Cys-49–Cys-111. Residues Asn-68, Asn-72, and Asn-102 are each glycosylated (N-linked (GlcNAc...) asparagine; by host). The helical transmembrane segment at 137-157 threads the bilayer; it reads AYCLVTCIITAIICVCIHLLI. The Cytoplasmic portion of the chain corresponds to 158–172; the sequence is VIRPRQSNEEKEKMP. The Di-lysine motif motif lies at 168–172; that stretch reads KEKMP.

It belongs to the adenoviridae E19 family. Both disulfide bonds are absolutely critical for the interaction with MHC antigens. Post-translationally, N-glycosylated; high-mannose.

Its subcellular location is the host endoplasmic reticulum membrane. Its function is as follows. Binds and retains class I heavy chains in the endoplasmic reticulum during the early period of virus infection, thereby impairing their transport to the cell surface. Also delays the expression of class I alleles that it cannot affect by direct retention. Binds transporters associated with antigen processing (TAP) and acts as a tapasin inhibitor, preventing class I/TAP association. In consequence, infected cells are masked for immune recognition by cytotoxic T-lymphocytes. In Human adenovirus B serotype 3 (HAdV-3), this protein is Early E3 18.5 kDa glycoprotein.